We begin with the raw amino-acid sequence, 283 residues long: tRNA-cytidine(32) 2-sulfurtransferase (283 aa).

The PP-loop motif signature appears at 37–42 (SGGKDS). [4Fe-4S] cluster-binding residues include Cys-112, Cys-115, and Cys-203.

This sequence belongs to the TtcA family. In terms of assembly, homodimer. Mg(2+) serves as cofactor. [4Fe-4S] cluster is required as a cofactor.

The protein resides in the cytoplasm. The enzyme catalyses cytidine(32) in tRNA + S-sulfanyl-L-cysteinyl-[cysteine desulfurase] + AH2 + ATP = 2-thiocytidine(32) in tRNA + L-cysteinyl-[cysteine desulfurase] + A + AMP + diphosphate + H(+). It participates in tRNA modification. Its function is as follows. Catalyzes the ATP-dependent 2-thiolation of cytidine in position 32 of tRNA, to form 2-thiocytidine (s(2)C32). The sulfur atoms are provided by the cysteine/cysteine desulfurase (IscS) system. This chain is tRNA-cytidine(32) 2-sulfurtransferase, found in Legionella pneumophila subsp. pneumophila (strain Philadelphia 1 / ATCC 33152 / DSM 7513).